The chain runs to 89 residues: Small ribosomal subunit protein bS20 (89 aa).

The tract at residues 1 to 26 is disordered; that stretch reads MANSAQARKRARQADGQRSHNASLRS.

The protein belongs to the bacterial ribosomal protein bS20 family.

Binds directly to 16S ribosomal RNA. The chain is Small ribosomal subunit protein bS20 from Dechloromonas aromatica (strain RCB).